The following is a 406-amino-acid chain: Nodal homolog (406 aa).

The signal sequence occupies residues 1–18; it reads MAFLTAVLYLGFACISQG. A propeptide spanning residues 19-281 is cleaved from the precursor; it reads LPTWPDRVES…RVPGIRRHRR (263 aa). N71, N136, and N172 each carry an N-linked (GlcNAc...) asparagine glycan. The interval 195 to 222 is disordered; it reads KERAERGSGMSNAEFIDAPGPSQQYNPH. Cystine bridges form between C306/C372, C335/C403, and C339/C405. An N-linked (GlcNAc...) asparagine glycan is attached at N344.

It belongs to the TGF-beta family. In terms of assembly, homodimer; disulfide-linked. Interacts with, and is inhibited by cer1 and gdf10/bmp3b. As to expression, in the first phase of expression, localized to the vegetal region of the blastula. During gastrulation (stage 10.5), this expression disappears and instead becomes localized to the dorsal marginal zone, with enrichment in the organizer. During the second phase of expression in neurulae and tailbud embryos, expression restarts firstly in two symmetric patches near the posterior end of the notochord, and then in a large asymmetrical domain in the left lateral plate mesoderm.

The protein localises to the secreted. In terms of biological role, cooperation and regulatory loops of multiple nodals are essential for mesendoderm patterning in early embryos. Essential for mesoderm formation and axial patterning during embryonic development. Activates the activin-like signaling pathway to induce dorsal and ventral mesoderm in animal cap ectoderm. In addition, also dorsalizes ventral marginal zone (VMZ) tissues during gastrulation. Acts in a downstream signaling cascade via cripto and cer1 to mediate cardiogenesis in embryonic mesoderm. Directs the orientation of the left-right axis by driving the left-specific gene cascade in the left lateral plate mesoderm. The sequence is that of Nodal homolog from Xenopus laevis (African clawed frog).